A 573-amino-acid chain; its full sequence is (R)-mandelonitrile lyase 3 (573 aa).

The N-terminal stretch at 1–27 (MVKSTMSAVLLVLHIFVLHLQYSEVQS) is a signal peptide. Residue asparagine 30 is glycosylated (N-linked (GlcNAc...) asparagine). Residue 63 to 64 (TA) participates in FAD binding. A glycan (N-linked (GlcNAc...) asparagine) is linked at asparagine 75. FAD-binding positions include 82-83 (ER), valine 129, threonine 133, and 137-140 (NAGV). 4 N-linked (GlcNAc...) asparagine glycosylation sites follow: asparagine 145, asparagine 150, asparagine 162, and asparagine 218. Residue valine 244 participates in FAD binding. Residues asparagine 252, asparagine 267, and asparagine 309 are each glycosylated (N-linked (GlcNAc...) asparagine). Cysteine 356 is a binding site for substrate. N-linked (GlcNAc...) asparagine glycosylation is found at asparagine 380, asparagine 402, asparagine 420, and asparagine 467. Cysteines 427 and 478 form a disulfide. Residue tyrosine 485 coordinates substrate. Residues 486-487 (WH) and glycine 515 contribute to the FAD site. The Proton donor role is filled by histidine 487. The active-site Proton acceptor is the histidine 525. Position 526–527 (526–527 (PQ)) interacts with FAD.

Belongs to the GMC oxidoreductase family. In terms of assembly, monomer. It depends on FAD as a cofactor.

It localises to the vacuole. It is found in the aleurone grain. It catalyses the reaction (R)-mandelonitrile = benzaldehyde + hydrogen cyanide. Functionally, involved in cyanogenesis, the release of HCN from injured tissues. Catalyzes the stereospecific addition of HCN to a variety of aldehydes in vitro. It is a major seed constituent, and could have the additional role of a storage form for reduced nitrogen. The chain is (R)-mandelonitrile lyase 3 (MDL3) from Prunus serotina (Black cherry).